The primary structure comprises 494 residues: UPF0371 protein SEQ_1471 (494 aa).

It belongs to the UPF0371 family.

This is UPF0371 protein SEQ_1471 from Streptococcus equi subsp. equi (strain 4047).